The sequence spans 109 residues: Irditoxin subunit A (109 aa).

A signal peptide spans 1–19 (MKTLLLAVAVVAFVCLGSA). The propeptide occupies 20 to 34 (DQLGLGRQQIDWGQG). Gln-35 bears the Pyrrolidone carboxylic acid mark. 5 disulfide bridges follow: Cys-44-Cys-66, Cys-47-Cys-55, Cys-61-Cys-85, Cys-89-Cys-100, and Cys-101-Cys-106.

This sequence belongs to the three-finger toxin family. Ancestral subfamily. Boigatoxin sub-subfamily. Heterodimer of A and B chains; disulfide-linked. In terms of tissue distribution, expressed by the venom gland.

It localises to the secreted. Functionally, this bird and reptile-specific postsynaptic neurotoxin inhibits the chick muscle alpha-1-beta-1-gamma-delta (CHRNA1-CHRNB1-CHRNG-CHNRD) nicotinic acetylcholine receptor (nAChR) 100-fold more compared with the mouse receptor. In vivo, produces rapid flaccid paralysis, dyspnea and increased respiratory rate in geckos. At sublethal doses geckos were immobilized for up to three days and then recovered. Chicks injected with lethal doses showed rapid onset of inactivity, dyspnea and neck droop, and no extended paralysis with survival was seen. This is Irditoxin subunit A from Boiga irregularis (Brown tree snake).